Here is a 102-residue protein sequence, read N- to C-terminus: ATP-dependent Clp protease adapter protein ClpS (102 aa).

Belongs to the ClpS family. As to quaternary structure, binds to the N-terminal domain of the chaperone ClpA.

Involved in the modulation of the specificity of the ClpAP-mediated ATP-dependent protein degradation. The protein is ATP-dependent Clp protease adapter protein ClpS of Shewanella sediminis (strain HAW-EB3).